The following is a 693-amino-acid chain: Elongation factor G (693 aa).

Positions 8 to 284 (DMTRNVGIMA…AIVNYMPAPT (277 aa)) constitute a tr-type G domain. GTP is bound by residues 17 to 24 (AHIDAGKT), 81 to 85 (DTPGH), and 135 to 138 (NKMD).

The protein belongs to the TRAFAC class translation factor GTPase superfamily. Classic translation factor GTPase family. EF-G/EF-2 subfamily.

Its subcellular location is the cytoplasm. In terms of biological role, catalyzes the GTP-dependent ribosomal translocation step during translation elongation. During this step, the ribosome changes from the pre-translocational (PRE) to the post-translocational (POST) state as the newly formed A-site-bound peptidyl-tRNA and P-site-bound deacylated tRNA move to the P and E sites, respectively. Catalyzes the coordinated movement of the two tRNA molecules, the mRNA and conformational changes in the ribosome. This is Elongation factor G from Fusobacterium nucleatum subsp. nucleatum (strain ATCC 25586 / DSM 15643 / BCRC 10681 / CIP 101130 / JCM 8532 / KCTC 2640 / LMG 13131 / VPI 4355).